A 97-amino-acid chain; its full sequence is Co-chaperonin GroES (97 aa).

Belongs to the GroES chaperonin family. Heptamer of 7 subunits arranged in a ring. Interacts with the chaperonin GroEL.

The protein resides in the cytoplasm. Functionally, together with the chaperonin GroEL, plays an essential role in assisting protein folding. The GroEL-GroES system forms a nano-cage that allows encapsulation of the non-native substrate proteins and provides a physical environment optimized to promote and accelerate protein folding. GroES binds to the apical surface of the GroEL ring, thereby capping the opening of the GroEL channel. The chain is Co-chaperonin GroES from Klebsiella pneumoniae (strain 342).